The primary structure comprises 80 residues: Large ribosomal subunit protein uL29 (80 aa).

Belongs to the universal ribosomal protein uL29 family.

This Mycobacterium marinum (strain ATCC BAA-535 / M) protein is Large ribosomal subunit protein uL29.